Reading from the N-terminus, the 201-residue chain is Potassium-transporting ATPase KdpC subunit (201 aa).

A helical membrane pass occupies residues 7-27; it reads PAFVVLIALTALTGLAYPLAM.

This sequence belongs to the KdpC family. As to quaternary structure, the system is composed of three essential subunits: KdpA, KdpB and KdpC.

It localises to the cell inner membrane. Its function is as follows. Part of the high-affinity ATP-driven potassium transport (or Kdp) system, which catalyzes the hydrolysis of ATP coupled with the electrogenic transport of potassium into the cytoplasm. This subunit acts as a catalytic chaperone that increases the ATP-binding affinity of the ATP-hydrolyzing subunit KdpB by the formation of a transient KdpB/KdpC/ATP ternary complex. The sequence is that of Potassium-transporting ATPase KdpC subunit from Xanthobacter autotrophicus (strain ATCC BAA-1158 / Py2).